Consider the following 541-residue polypeptide: Propionate catabolism operon regulatory protein (541 aa).

One can recognise a Sigma-54 factor interaction domain in the interval 221–464; it reads IRGQSPQMEQ…RNMMERLALF (244 aa). An ATP-binding site is contributed by 321–330; the sequence is AHGGTLFLDE. Residues 513–532 constitute a DNA-binding region (H-T-H motif); it reads KTAAARYLGISRTTLWRRLK.

Involved in the transcriptional regulation of the propionate catabolism operon. This Salmonella typhimurium (strain LT2 / SGSC1412 / ATCC 700720) protein is Propionate catabolism operon regulatory protein (prpR).